Reading from the N-terminus, the 1494-residue chain is DNA-directed RNA polymerase subunit beta' (1494 aa).

Zn(2+)-binding residues include cysteine 67, cysteine 69, cysteine 82, and cysteine 85. Positions 499, 501, and 503 each coordinate Mg(2+). Positions 868, 944, 951, and 954 each coordinate Zn(2+).

This sequence belongs to the RNA polymerase beta' chain family. As to quaternary structure, the RNAP catalytic core consists of 2 alpha, 1 beta, 1 beta' and 1 omega subunit. When a sigma factor is associated with the core the holoenzyme is formed, which can initiate transcription. The cofactor is Mg(2+). Zn(2+) is required as a cofactor.

It carries out the reaction RNA(n) + a ribonucleoside 5'-triphosphate = RNA(n+1) + diphosphate. Functionally, DNA-dependent RNA polymerase catalyzes the transcription of DNA into RNA using the four ribonucleoside triphosphates as substrates. The protein is DNA-directed RNA polymerase subunit beta' of Chlorobaculum parvum (strain DSM 263 / NCIMB 8327) (Chlorobium vibrioforme subsp. thiosulfatophilum).